We begin with the raw amino-acid sequence, 499 residues long: Bifunctional purine biosynthesis protein PurH (499 aa).

The MGS-like domain maps to 1 to 144; the sequence is MIKRALISVF…KNFKDVVVLT (144 aa).

This sequence belongs to the PurH family.

The enzyme catalyses (6R)-10-formyltetrahydrofolate + 5-amino-1-(5-phospho-beta-D-ribosyl)imidazole-4-carboxamide = 5-formamido-1-(5-phospho-D-ribosyl)imidazole-4-carboxamide + (6S)-5,6,7,8-tetrahydrofolate. It carries out the reaction IMP + H2O = 5-formamido-1-(5-phospho-D-ribosyl)imidazole-4-carboxamide. Its pathway is purine metabolism; IMP biosynthesis via de novo pathway; 5-formamido-1-(5-phospho-D-ribosyl)imidazole-4-carboxamide from 5-amino-1-(5-phospho-D-ribosyl)imidazole-4-carboxamide (10-formyl THF route): step 1/1. It participates in purine metabolism; IMP biosynthesis via de novo pathway; IMP from 5-formamido-1-(5-phospho-D-ribosyl)imidazole-4-carboxamide: step 1/1. The protein is Bifunctional purine biosynthesis protein PurH of Clostridium botulinum (strain Okra / Type B1).